The following is a 110-amino-acid chain: MATTAILKNARLSAQKGRLVADQVRGLPVDKALDILGFSPKKASALIRKVLESAIANAEHNDGADIDELRVAAIMVNEGPTIKRIRARARGRASRVFKRSCHIKVMVSED.

Belongs to the universal ribosomal protein uL22 family. In terms of assembly, part of the 50S ribosomal subunit.

This protein binds specifically to 23S rRNA; its binding is stimulated by other ribosomal proteins, e.g. L4, L17, and L20. It is important during the early stages of 50S assembly. It makes multiple contacts with different domains of the 23S rRNA in the assembled 50S subunit and ribosome. Its function is as follows. The globular domain of the protein is located near the polypeptide exit tunnel on the outside of the subunit, while an extended beta-hairpin is found that lines the wall of the exit tunnel in the center of the 70S ribosome. This is Large ribosomal subunit protein uL22 from Nitrosococcus oceani (strain ATCC 19707 / BCRC 17464 / JCM 30415 / NCIMB 11848 / C-107).